We begin with the raw amino-acid sequence, 458 residues long: Argininosuccinate lyase (458 aa).

Belongs to the lyase 1 family. Argininosuccinate lyase subfamily.

It is found in the cytoplasm. It carries out the reaction 2-(N(omega)-L-arginino)succinate = fumarate + L-arginine. It functions in the pathway amino-acid biosynthesis; L-arginine biosynthesis; L-arginine from L-ornithine and carbamoyl phosphate: step 3/3. The polypeptide is Argininosuccinate lyase (Haemophilus ducreyi (strain 35000HP / ATCC 700724)).